Reading from the N-terminus, the 315-residue chain is Lipoyl synthase (315 aa).

7 residues coordinate [4Fe-4S] cluster: C62, C67, C73, C88, C92, C95, and S302. The 218-residue stretch at 74–291 (FGKGTATFMI…ETEALRMGFR (218 aa)) folds into the Radical SAM core domain.

It belongs to the radical SAM superfamily. Lipoyl synthase family. Requires [4Fe-4S] cluster as cofactor.

The protein localises to the cytoplasm. The enzyme catalyses [[Fe-S] cluster scaffold protein carrying a second [4Fe-4S](2+) cluster] + N(6)-octanoyl-L-lysyl-[protein] + 2 oxidized [2Fe-2S]-[ferredoxin] + 2 S-adenosyl-L-methionine + 4 H(+) = [[Fe-S] cluster scaffold protein] + N(6)-[(R)-dihydrolipoyl]-L-lysyl-[protein] + 4 Fe(3+) + 2 hydrogen sulfide + 2 5'-deoxyadenosine + 2 L-methionine + 2 reduced [2Fe-2S]-[ferredoxin]. The protein operates within protein modification; protein lipoylation via endogenous pathway; protein N(6)-(lipoyl)lysine from octanoyl-[acyl-carrier-protein]: step 2/2. In terms of biological role, catalyzes the radical-mediated insertion of two sulfur atoms into the C-6 and C-8 positions of the octanoyl moiety bound to the lipoyl domains of lipoate-dependent enzymes, thereby converting the octanoylated domains into lipoylated derivatives. In Azoarcus sp. (strain BH72), this protein is Lipoyl synthase.